Here is a 394-residue protein sequence, read N- to C-terminus: Phosphoglycerate kinase (394 aa).

Residues 21 to 23 (DFN), arginine 36, 59 to 62 (HLGR), arginine 118, and arginine 151 each bind substrate. Phosphoserine is present on serine 183. ATP is bound by residues lysine 201 and glycine 292. Threonine 299 is subject to Phosphothreonine. ATP contacts are provided by residues glutamate 323 and 350-353 (GGDS).

It belongs to the phosphoglycerate kinase family. Monomer.

It localises to the cytoplasm. It carries out the reaction (2R)-3-phosphoglycerate + ATP = (2R)-3-phospho-glyceroyl phosphate + ADP. Its pathway is carbohydrate degradation; glycolysis; pyruvate from D-glyceraldehyde 3-phosphate: step 2/5. The polypeptide is Phosphoglycerate kinase (Bacillus thuringiensis (strain Al Hakam)).